The following is a 349-amino-acid chain: S-adenosylmethionine:tRNA ribosyltransferase-isomerase (349 aa).

It belongs to the QueA family. In terms of assembly, monomer.

The protein localises to the cytoplasm. It carries out the reaction 7-aminomethyl-7-carbaguanosine(34) in tRNA + S-adenosyl-L-methionine = epoxyqueuosine(34) in tRNA + adenine + L-methionine + 2 H(+). Its pathway is tRNA modification; tRNA-queuosine biosynthesis. Its function is as follows. Transfers and isomerizes the ribose moiety from AdoMet to the 7-aminomethyl group of 7-deazaguanine (preQ1-tRNA) to give epoxyqueuosine (oQ-tRNA). The protein is S-adenosylmethionine:tRNA ribosyltransferase-isomerase of Pseudomonas putida (strain W619).